Reading from the N-terminus, the 360-residue chain is Phospho-N-acetylmuramoyl-pentapeptide-transferase (360 aa).

10 helical membrane-spanning segments follow: residues 25–45 (RAIL…PWVI), 73–93 (TMGG…WADL), 97–117 (YVLA…VDDY), 132–152 (WKYF…FVTA), 168–188 (VAWQ…VGFS), 199–219 (GLAI…AYLV), 236–256 (SGEL…FLWF), 263–283 (VFMG…IAVI), 288–308 (IVFF…ILQV), and 339–359 (IVRF…TLKI).

The protein belongs to the glycosyltransferase 4 family. MraY subfamily. The cofactor is Mg(2+).

It is found in the cell inner membrane. The enzyme catalyses UDP-N-acetyl-alpha-D-muramoyl-L-alanyl-gamma-D-glutamyl-meso-2,6-diaminopimeloyl-D-alanyl-D-alanine + di-trans,octa-cis-undecaprenyl phosphate = di-trans,octa-cis-undecaprenyl diphospho-N-acetyl-alpha-D-muramoyl-L-alanyl-D-glutamyl-meso-2,6-diaminopimeloyl-D-alanyl-D-alanine + UMP. Its pathway is cell wall biogenesis; peptidoglycan biosynthesis. Functionally, catalyzes the initial step of the lipid cycle reactions in the biosynthesis of the cell wall peptidoglycan: transfers peptidoglycan precursor phospho-MurNAc-pentapeptide from UDP-MurNAc-pentapeptide onto the lipid carrier undecaprenyl phosphate, yielding undecaprenyl-pyrophosphoryl-MurNAc-pentapeptide, known as lipid I. In Teredinibacter turnerae (strain ATCC 39867 / T7901), this protein is Phospho-N-acetylmuramoyl-pentapeptide-transferase.